The sequence spans 355 residues: Uroporphyrinogen decarboxylase (355 aa).

Substrate contacts are provided by residues 38-42, Asp-87, Tyr-162, Ser-217, and His-331; that span reads RQAGR.

Belongs to the uroporphyrinogen decarboxylase family. Homodimer.

Its subcellular location is the cytoplasm. The catalysed reaction is uroporphyrinogen III + 4 H(+) = coproporphyrinogen III + 4 CO2. The protein operates within porphyrin-containing compound metabolism; protoporphyrin-IX biosynthesis; coproporphyrinogen-III from 5-aminolevulinate: step 4/4. Functionally, catalyzes the decarboxylation of four acetate groups of uroporphyrinogen-III to yield coproporphyrinogen-III. This chain is Uroporphyrinogen decarboxylase, found in Streptomyces coelicolor (strain ATCC BAA-471 / A3(2) / M145).